Reading from the N-terminus, the 140-residue chain is ISDra2 transposase TnpA (140 aa).

Positions 67 and 69 each coordinate Mg(2+). Residues 127–133 (AQIQKYI) are mobile alpha helix. Tyr132 acts as the Nucleophile in catalysis. Gln136 lines the Mg(2+) pocket.

It belongs to the transposase 17 family. As to quaternary structure, homodimer. Mg(2+) is required as a cofactor.

Its activity is regulated as follows. Both the excision and insertion steps are inhibited by TnpB. In terms of biological role, a transposase that is part of insertion sequence (IS) element ISDra2, it is necessary and sufficient for both transposon excision and insertion of ISDra2. This protein alone can be provided in trans and allows transposition of an empty IS element (tnpA or tnpA-tnpB replaced by a selectable marker). ISDra2 binds subterminal imperfect palindromes at the left (LE) and right (RE) ends of the element and cleaves only the 'top strand' which is circularized and subsequently reinserted into the DNA target. This is called a 'peel and paste' mechanism and increases the copy number of the IS. Transposition is linked to DNA replication in the absence of irradiation, with maximal activity when the 'top strand' is on the replication lagging strand, and occurs preferentially on the lagging strand. The IS element inserts 3' of the target sequence 5'-TTGAT-3'; target duplication has not been observed. This chain is ISDra2 transposase TnpA, found in Deinococcus radiodurans (strain ATCC 13939 / DSM 20539 / JCM 16871 / CCUG 27074 / LMG 4051 / NBRC 15346 / NCIMB 9279 / VKM B-1422 / R1).